The chain runs to 319 residues: MVVVTVARSNADVNEKKDERYWNYECYTITTGSIEKYQIYQRMGRGKYSEVFEGRKDREKIVIKALKPVRKAKICREVLILRNLSHKNIIKLMDVVVDPESQIYSLIFEYIEHEDYAKIFEKLCYKDIVEYSRQILSALSYCHSMGIIHRDIKPQNMVINQARRELKIIDWGLAEFYHPKKEYSVRVASRYYKGPELLVDYPYYDYSLDIWSFGCVLAELVFKKRPFFHGESNSDQLVKIARILGYTHLKKYVRKYKMAPLNPKYEGVGERVLLSSFTPPGKTGLYTNAIDLLEKILIYDHQDRPTADECLRHPLFESR.

The Protein kinase domain maps to 37-316 (YQIYQRMGRG…ADECLRHPLF (280 aa)). ATP is bound by residues 43 to 51 (MGRGKYSEV) and K64. D151 serves as the catalytic Proton acceptor.

This sequence belongs to the protein kinase superfamily. Ser/Thr protein kinase family. CK2 subfamily. In terms of assembly, tetramer composed of two alpha chains, one beta chain and one beta' chain.

The catalysed reaction is L-seryl-[protein] + ATP = O-phospho-L-seryl-[protein] + ADP + H(+). It carries out the reaction L-threonyl-[protein] + ATP = O-phospho-L-threonyl-[protein] + ADP + H(+). Functionally, catalytic subunit of a constitutively active serine/threonine-protein kinase complex that phosphorylates a large number of substrates containing acidic residues C-terminal to the phosphorylated serine or threonine. The chain is Probable casein kinase II subunit alpha homolog (CKA1) from Encephalitozoon cuniculi (strain GB-M1) (Microsporidian parasite).